We begin with the raw amino-acid sequence, 2912 residues long: Fibrillin-2 (2912 aa).

An N-terminal signal peptide occupies residues 1–28; the sequence is MGRRRRLCLQLYFLWLGCVVLWAQGTAG. The tract at residues 27 to 52 is disordered; the sequence is AGQPQPPPPKPPRPQPPPQQVRSATA. Residues 29 to 77 constitute a propeptide that is removed on maturation; the sequence is QPQPPPPKPPRPQPPPQQVRSATAGSEGGFLAPEYREEGAAVASRVRRR. Residues 30 to 45 show a composition bias toward pro residues; it reads PQPPPPKPPRPQPPPQ. EGF-like domains follow at residues 111–142, 145–176, and 176–208; these read IVPICRNSCGDGFCSRPNMCTCSSGQISSTCG, SIQQCSVRCMNGGTCADDHCQCQKGYIGTYCG, and GQPVCENGCQNGGRCIGPNRCACVYGFTGPQCE. 9 disulfides stabilise this stretch: Cys115–Cys124, Cys119–Cys130, Cys132–Cys141, Cys149–Cys159, Cys153–Cys164, Cys166–Cys175, Cys180–Cys190, Cys184–Cys196, and Cys198–Cys207. Positions 149–359 are interaction with MFAP4; sequence CSVRCMNGGT…VTSTDGSRCI (211 aa). The region spanning 214-266 is the TB 1 domain; the sequence is GPCFTQVNNQMCQGQLTGIVCTKTLCCATIGRAWGHPCEMCPAQPQPCRRGFI. The EGF-like 4; calcium-binding domain maps to 276–317; the sequence is DVDECQAIPGICQGGNCINTVGSFECRCPAGHKQSETTQKCE. Cystine bridges form between Cys280/Cys292, Cys287/Cys301, Cys303/Cys316, Cys322/Cys334, Cys329/Cys343, and Cys345/Cys358. Residue Ser298 is glycosylated (O-linked (Glc) serine). Positions 318 to 359 constitute an EGF-like 5; calcium-binding domain; sequence DIDECSIIPGICETGECSNTVGSYFCVCPRGYVTSTDGSRCI. An O-linked (Glc) serine glycan is attached at Ser340. The region spanning 364 to 417 is the TB 2 domain; that stretch reads GMCFSGLVNGRCAQELPGRMTKMQCCCEPGRCWGIGTIPEACPVRGSEEYRRLC. N-linked (GlcNAc...) asparagine glycosylation is present at Asn492. The region spanning 494 to 534 is the EGF-like 6 domain; the sequence is TIDICKHHANLCLNGRCIPTVSSYRCECNMGYKQDANGDCI. 15 disulfides stabilise this stretch: Cys498-Cys510, Cys505-Cys519, Cys521-Cys533, Cys539-Cys549, Cys544-Cys558, Cys560-Cys573, Cys579-Cys591, Cys586-Cys600, Cys602-Cys615, Cys621-Cys632, Cys627-Cys641, Cys643-Cys656, Cys662-Cys673, Cys668-Cys682, and Cys684-Cys697. O-linked (Glc) serine glycosylation is present at Ser516. The 40-residue stretch at 535–574 folds into the EGF-like 7; calcium-binding domain; the sequence is DVDECTSNPCTNGDCVNTPGSYYCKCHAGFQRTPTKQACI. A glycan (O-linked (Glc) serine) is linked at Ser555. One can recognise an EGF-like 8; calcium-binding domain in the interval 575-616; sequence DIDECIQNGVLCKNGRCVNTDGSFQCICNAGFELTTDGKNCV. A glycan (O-linked (Glc) serine) is linked at Ser597. Residues 617-657 form the EGF-like 9; calcium-binding domain; that stretch reads DHDECTTTNMCLNGMCINEDGSFKCICKPGFVLAPNGRYCT. An O-linked (Glc) serine glycan is attached at Ser638. Residues 658–698 enclose the EGF-like 10; calcium-binding domain; it reads DVDECQTPGICMNGHCINSEGSFRCDCPPGLAVGMDGRVCV. The O-linked (Glc) serine glycan is linked to Ser679. Positions 704 to 756 constitute a TB 3 domain; that stretch reads STCYGGIKKGVCVRPFPGAVTKSECCCANPDYGFGEPCQPCPAKNSAEFHGLC. Positions 768-809 constitute an EGF-like 11; calcium-binding domain; sequence DINECALDPDICANGICENLRGSYRCNCNSGYEPDASGRNCI. Disulfide bonds link Cys772–Cys784, Cys779–Cys793, Cys795–Cys808, Cys814–Cys826, Cys821–Cys835, Cys837–Cys850, Cys856–Cys866, Cys861–Cys875, and Cys877–Cys890. An EGF-like 12; calcium-binding domain is found at 810-851; it reads DIDECLVNRLLCDNGLCRNTPGSYSCTCPPGYVFRTETETCE. Ser832 is a glycosylation site (O-linked (Glc) serine). The 40-residue stretch at 852-891 folds into the EGF-like 13; calcium-binding domain; that stretch reads DINECESNPCVNGACRNNLGSFNCECSPGSKLSSTGLICI. Ser872 carries an O-linked (Glc) serine glycan. The TB 4 domain occupies 896 to 947; that stretch reads GTCWLNIQDSRCEVNINGATLKSECCATLGAAWGSPCERCELDTACPRGLAR. The EGF-like 14; calcium-binding domain occupies 955 to 996; it reads DVNECEVFPGVCPNGRCVNSKGSFHCECPEGLTLDGTGRVCL. Cystine bridges form between Cys959–Cys971, Cys966–Cys980, and Cys982–Cys995. Ser977 carries an O-linked (Glc) serine glycan. The TB 5 domain occupies 1001–1052; that stretch reads EQCYLKWDEDECIHPVPGKFRMDACCCAVGAAWGTECEECPKPGTKEYETLC. In terms of domain architecture, EGF-like 15; calcium-binding spans 1073-1114; that stretch reads DINECKAFPGMCTYGKCRNTIGSFKCRCNSGFALDMEERNCT. 36 disulfides stabilise this stretch: Cys1077–Cys1089, Cys1084–Cys1098, Cys1100–Cys1113, Cys1119–Cys1131, Cys1126–Cys1140, Cys1142–Cys1156, Cys1162–Cys1174, Cys1169–Cys1183, Cys1185–Cys1198, Cys1204–Cys1216, Cys1211–Cys1225, Cys1227–Cys1240, Cys1246–Cys1257, Cys1253–Cys1266, Cys1268–Cys1281, Cys1287–Cys1299, Cys1294–Cys1308, Cys1310–Cys1323, Cys1329–Cys1341, Cys1336–Cys1350, Cys1352–Cys1365, Cys1371–Cys1384, Cys1378–Cys1393, Cys1395–Cys1406, Cys1412–Cys1425, Cys1419–Cys1434, Cys1436–Cys1447, Cys1453–Cys1465, Cys1460–Cys1474, Cys1476–Cys1489, Cys1495–Cys1506, Cys1501–Cys1515, Cys1517–Cys1530, Cys1536–Cys1547, Cys1542–Cys1556, and Cys1558–Cys1571. O-linked (Glc) serine glycosylation is present at Ser1095. Residue Asn1112 is glycosylated (N-linked (GlcNAc...) asparagine). The region spanning 1115–1157 is the EGF-like 16; calcium-binding domain; that stretch reads DIDECRISPDLCGSGICVNTPGSFECECFEGYESGFMMMKNCM. The EGF-like 17; calcium-binding domain occupies 1158–1199; sequence DIDECERNPLLCRGGTCVNTEGSFQCDCPLGHELSPSREDCV. An O-linked (Glc) serine glycan is attached at Ser1180. The EGF-like 18; calcium-binding domain occupies 1200–1241; that stretch reads DINECSLSDNLCRNGKCVNMIGTYQCSCNPGYQATPDRQGCT. The O-linked (Glc) threonine glycan is linked to Thr1222. Residues 1242-1282 form the EGF-like 19; calcium-binding domain; sequence DIDECMIMNGGCDTQCTNSEGSYECSCSEGYALMPDGRSCA. O-linked (Glc) serine glycosylation occurs at Ser1263. An EGF-like 20; calcium-binding domain is found at 1283 to 1324; that stretch reads DIDECENNPDICDGGQCTNIPGEYRCLCYDGFMASMDMKTCI. An EGF-like 21; calcium-binding domain is found at 1325-1366; sequence DVNECDLNSNICMFGECENTKGSFICHCQLGYSVKKGTTGCT. The O-linked (Glc) serine glycan is linked to Ser1347. The EGF-like 22; calcium-binding domain maps to 1367–1407; the sequence is DVDECEIGAHNCDMHASCLNIPGSFKCSCREGWIGNGIKCI. The O-linked (Glc) serine glycan is linked to Ser1390. The 41-residue stretch at 1408-1448 folds into the EGF-like 23; calcium-binding domain; sequence DLDECSNGTHQCSINAQCVNTPGSYRCACSEGFTGDGFTCS. The N-linked (GlcNAc...) asparagine glycan is linked to Asn1414. The EGF-like 24; calcium-binding domain maps to 1449–1490; it reads DVDECAENINLCENGQCLNVPGAYRCECEMGFTPASDSRSCQ. One can recognise an EGF-like 25; calcium-binding domain in the interval 1491 to 1531; that stretch reads DIDECSFQNICVFGTCNNLPGMFHCICDDGYELDRTGGNCT. Asn1529 carries N-linked (GlcNAc...) asparagine glycosylation. The region spanning 1532-1572 is the EGF-like 26; calcium-binding domain; it reads DIDECADPINCVNGLCVNTPGRYECNCPPDFQLNPTGVGCV. One can recognise a TB 6 domain in the interval 1577 to 1633; the sequence is GNCYLKFGPRGDGSLSCNTEIGVGVSRSSCCCSLGKAWGNPCETCPPVNSTEYYTLC. N-linked (GlcNAc...) asparagine glycosylation is present at Asn1625. In terms of domain architecture, EGF-like 27; calcium-binding spans 1650–1691; the sequence is DIDECQELPGLCQGGNCINTFGSFQCECPQGYYLSEDTRICE. 6 disulfides stabilise this stretch: Cys1654–Cys1666, Cys1661–Cys1675, Cys1677–Cys1690, Cys1696–Cys1708, Cys1703–Cys1717, and Cys1719–Cys1732. Ser1672 carries O-linked (Glc) serine glycosylation. The EGF-like 28; calcium-binding domain maps to 1692 to 1733; the sequence is DIDECFAHPGVCGPGTCYNTLGNYTCICPPEYMQVNGGHNCM. Asn1714 is a glycosylation site (N-linked (GlcNAc...) asparagine). The tract at residues 1735-2171 is interaction with MFAP4; the sequence is MRKSFCYRSY…VPSLHDTRED (437 aa). The 54-residue stretch at 1738–1791 folds into the TB 7 domain; it reads SFCYRSYNGTTCENELPFNVTKRMCCCTYNVGKAWNKPCEPCPTPGTADFKTIC. Residues Asn1745 and Asn1756 are each glycosylated (N-linked (GlcNAc...) asparagine). The 42-residue stretch at 1808–1849 folds into the EGF-like 29; calcium-binding domain; that stretch reads DIDECKEIPGICANGVCINQIGSFRCECPTGFSYNDLLLVCE. 21 disulfide bridges follow: Cys1812/Cys1824, Cys1819/Cys1833, Cys1835/Cys1848, Cys1854/Cys1867, Cys1861/Cys1876, Cys1878/Cys1890, Cys1896/Cys1908, Cys1903/Cys1917, Cys1919/Cys1932, Cys1938/Cys1948, Cys1943/Cys1957, Cys1959/Cys1971, Cys1977/Cys1990, Cys1985/Cys1999, Cys2001/Cys2014, Cys2020/Cys2032, Cys2027/Cys2041, Cys2043/Cys2054, Cys2060/Cys2072, Cys2067/Cys2081, and Cys2083/Cys2096. An EGF-like 30; calcium-binding domain is found at 1850–1891; that stretch reads DIDECSNGDNLCQRNADCINSPGSYRCECAAGFKLSPNGACV. Ser1873 carries an O-linked (Glc) serine glycan. Residues 1892 to 1933 form the EGF-like 31; calcium-binding domain; the sequence is DRNECLEIPNVCSHGLCVDLQGSYQCICHNGFKASQDQTMCM. The region spanning 1934-1972 is the EGF-like 32; calcium-binding domain; it reads DVDECERHPCGNGTCKNTVGSYNCLCYPGFELTHNNDCL. Asn1945 is a glycosylation site (N-linked (GlcNAc...) asparagine). O-linked (Glc) serine glycosylation is present at Ser1954. The 43-residue stretch at 1973-2015 folds into the EGF-like 33; calcium-binding domain; sequence DIDECSSFFGQVCRNGRCFNEIGSFKCLCNEGYELTPDGKNCI. Ser1996 carries O-linked (Glc) serine glycosylation. The 40-residue stretch at 2016–2055 folds into the EGF-like 34; calcium-binding domain; sequence DTNECVALPGSCSPGTCQNLEGSFRCICPPGYEVKSENCI. Residues 2056-2097 enclose the EGF-like 35; calcium-binding domain; that stretch reads DINECDEDPNICLFGSCTNTPGGFQCLCPPGFVLSDNGRRCF. The TB 8 domain maps to 2102 to 2155; it reads SFCFTNFENGKCSVPKAFNTTKAKCCCSKMPGEGWGDPCELCPKDDEVAFQDLC. N-linked (GlcNAc...) asparagine glycosylation occurs at Asn2120. The region spanning 2171–2212 is the EGF-like 36; calcium-binding domain; it reads DVNECLESPGICSNGQCINTDGSFRCECPMGYNLDYTGVRCV. Disulfide bonds link Cys2175-Cys2187, Cys2182-Cys2196, Cys2198-Cys2211, Cys2217-Cys2228, Cys2223-Cys2237, Cys2239-Cys2251, Cys2257-Cys2268, Cys2264-Cys2277, Cys2279-Cys2292, Cys2298-Cys2312, Cys2305-Cys2321, Cys2323-Cys2336, Cys2342-Cys2354, Cys2349-Cys2363, and Cys2365-Cys2378. Ser2193 is a glycosylation site (O-linked (Glc) serine). The EGF-like 37; calcium-binding domain occupies 2213–2252; that stretch reads DTDECSIGNPCGNGTCTNVIGSFECNCNEGFEPGPMMNCE. Asn2225 is a glycosylation site (N-linked (GlcNAc...) asparagine). Residues 2253-2293 enclose the EGF-like 38; calcium-binding domain; the sequence is DINECAQNPLLCAFRCMNTFGSYECTCPIGYALREDQKMCK. Ser2274 carries an O-linked (Glc) serine glycan. One can recognise an EGF-like 39; calcium-binding domain in the interval 2294-2337; that stretch reads DLDECAEGLHDCESRGMMCKNLIGTFMCICPPGMARRPDGEGCV. In terms of domain architecture, EGF-like 40; calcium-binding spans 2338–2379; sequence DENECRTKPGICENGRCVNIIGSYRCECNEGFQSSSSGTECL. Ser2360 carries an O-linked (Glc) serine glycan. The 54-residue stretch at 2384 to 2437 folds into the TB 9 domain; that stretch reads GLCFAEVLQTICQMASSSRNLVTKSECCCDGGRGWGHQCELCPLPGTAQYKKIC. Positions 2449–2490 constitute an EGF-like 41; calcium-binding domain; that stretch reads DIDECKVMPNLCTNGQCINTMGSFRCFCKVGYTTDISGTSCI. 21 disulfide bridges follow: Cys2453-Cys2465, Cys2460-Cys2474, Cys2476-Cys2489, Cys2495-Cys2506, Cys2502-Cys2515, Cys2517-Cys2530, Cys2536-Cys2547, Cys2543-Cys2556, Cys2558-Cys2569, Cys2575-Cys2588, Cys2582-Cys2597, Cys2599-Cys2612, Cys2618-Cys2628, Cys2624-Cys2637, Cys2639-Cys2652, Cys2658-Cys2669, Cys2664-Cys2678, Cys2680-Cys2693, Cys2699-Cys2710, Cys2706-Cys2719, and Cys2721-Cys2733. O-linked (Glc) serine glycosylation occurs at Ser2471. In terms of domain architecture, EGF-like 42; calcium-binding spans 2491-2531; it reads DLDECSQSPKPCNYICKNTEGSYQCSCPRGYVLQEDGKTCK. Ser2512 carries an O-linked (Glc) serine glycan. The region spanning 2532–2570 is the EGF-like 43; calcium-binding domain; it reads DLDECQTKQHNCQFLCVNTLGGFTCKCPPGFTQHHTACI. Residues 2571 to 2613 form the EGF-like 44; calcium-binding domain; sequence DNNECGSQPSLCGAKGICQNTPGSFSCECQRGFSLDATGLNCE. Ser2594 is a glycosylation site (O-linked (Glc) serine). The 40-residue stretch at 2614–2653 folds into the EGF-like 45; calcium-binding domain; the sequence is DVDECDGNHRCQHGCQNILGGYRCGCPQGYIQHYQWNQCV. The 41-residue stretch at 2654-2694 folds into the EGF-like 46; calcium-binding domain; that stretch reads DENECSNPNACGSASCYNTLGSYKCACPSGFSFDQFSSACH. O-linked (Glc) serine glycosylation occurs at Ser2675. The EGF-like 47; calcium-binding domain maps to 2695-2734; the sequence is DVNECSSSKNPCNYGCSNTEGGYLCGCPPGYYRVGQGHCV. N-linked (GlcNAc...) asparagine glycosylation is present at Asn2808.

It belongs to the fibrillin family. As to quaternary structure, interacts with BMP2, BMP4, BMP7, BMP10 and GDF5. Interacts with MFAP2 and MFAP5. Interacts with ADAMTSL5. Interacts with MFAP4. In terms of processing, N-glycosylated. O-glycosylated on serine residues by POGLUT2 and POGLUT3. Almost exclusively expressed in placenta. Expressed at much lower level in other tissues. Expressed in fetal eye (18 weeks)in the retinal pigment epithelium (RPE), the choroid, Bruch's membrane and in the sclera. Not expressed in the neural retina. As to expression, present at high level in cytotrophoblasts as compared with syncytiotrophoblasts at 8-9 weeks of pregnancy (at protein level). Levels in the serum increase during pregnancy (at protein level).

The protein resides in the secreted. Its subcellular location is the extracellular space. It localises to the extracellular matrix. Functionally, fibrillins are structural components of 10-12 nm extracellular calcium-binding microfibrils, which occur either in association with elastin or in elastin-free bundles. Fibrillin-2-containing microfibrils regulate the early process of elastic fiber assembly. Regulates osteoblast maturation by controlling TGF-beta bioavailability and calibrating TGF-beta and BMP levels, respectively. Hormone secreted by trophoblasts that promotes trophoblast invasiveness. Has glucogenic activity: is able to increase plasma glucose levels. This Homo sapiens (Human) protein is Fibrillin-2.